A 210-amino-acid chain; its full sequence is Large ribosomal subunit protein uL4 (210 aa).

The disordered stretch occupies residues 44–79 (QHQGTHKVKTRSEVSGGGRKPYRQKGTGNARRGSSR).

This sequence belongs to the universal ribosomal protein uL4 family. As to quaternary structure, part of the 50S ribosomal subunit.

In terms of biological role, one of the primary rRNA binding proteins, this protein initially binds near the 5'-end of the 23S rRNA. It is important during the early stages of 50S assembly. It makes multiple contacts with different domains of the 23S rRNA in the assembled 50S subunit and ribosome. Forms part of the polypeptide exit tunnel. The chain is Large ribosomal subunit protein uL4 from Chloroherpeton thalassium (strain ATCC 35110 / GB-78).